Here is a 165-residue protein sequence, read N- to C-terminus: Transmembrane protein 253 (165 aa).

Transmembrane regions (helical) follow at residues 31-51 (LVLAVSQLWLAVAVVPFAVSV), 60-80 (MTTALPLGPGILGLLTGIVTL), and 91-111 (LAGLLVLELSAEAFTLGGVLV). Residues 145 to 165 (EEVPELETGPTVASTAKRTNQ) form a disordered region. The span at 155–165 (TVASTAKRTNQ) shows a compositional bias: polar residues.

It is found in the membrane. The protein is Transmembrane protein 253 (TMEM253) of Bos taurus (Bovine).